The sequence spans 427 residues: mRNA cap guanine-N(7) methyltransferase (427 aa).

The disordered stretch occupies residues 1-79 (MSLNYEQNAA…EPETEAASGA (79 aa)). 5 positions are modified to phosphoserine: serine 22, serine 24, serine 29, serine 46, and serine 48. Residues 44-57 (HVSKSPREYYDEPG) show a composition bias toward basic and acidic residues. Residues 103-411 (SKIFFMRNFN…LYLVCAFKKC (309 aa)) form the mRNA cap 0 methyltransferase domain. 112 to 113 (NN) is an mRNA binding site. 6 residues coordinate S-adenosyl-L-methionine: lysine 116, cysteine 143, aspartate 165, aspartate 202, glutamine 225, and tyrosine 230.

It belongs to the class I-like SAM-binding methyltransferase superfamily. mRNA cap 0 methyltransferase family.

It localises to the nucleus. It catalyses the reaction a 5'-end (5'-triphosphoguanosine)-ribonucleoside in mRNA + S-adenosyl-L-methionine = a 5'-end (N(7)-methyl 5'-triphosphoguanosine)-ribonucleoside in mRNA + S-adenosyl-L-homocysteine. Its function is as follows. mRNA-capping methyltransferase that methylates the N7 position of the added guanosine to the 5'-cap structure of mRNAs. Binds RNA containing 5'-terminal GpppC. This is mRNA cap guanine-N(7) methyltransferase from Drosophila melanogaster (Fruit fly).